Consider the following 79-residue polypeptide: Small ribosomal subunit protein bS21 (79 aa).

The interval 59–79 (RKKMQREGLLPMKPKPVVGVR) is disordered.

The protein belongs to the bacterial ribosomal protein bS21 family.

The chain is Small ribosomal subunit protein bS21 from Methylocella silvestris (strain DSM 15510 / CIP 108128 / LMG 27833 / NCIMB 13906 / BL2).